The chain runs to 698 residues: Probable xyloglucan glycosyltransferase 2 (698 aa).

2 consecutive transmembrane segments (helical) span residues 124–144 and 190–210; these read GFLA…WNGW and ILLF…CFWI. Asp-272 is an active-site residue. Substrate contacts are provided by Asp-331 and Asp-333. Residue Asp-425 is part of the active site. A run of 4 helical transmembrane segments spans residues 503–523, 528–548, 653–668, and 673–693; these read LILP…TMFV, LPVW…ILPS, LALS…RSLL, and IHFY…LDLI.

It belongs to the glycosyltransferase 2 family. Plant cellulose synthase-like C subfamily.

It localises to the golgi apparatus membrane. Its function is as follows. Probable beta-1,4-glucan synthase rather involved in the synthesis of the xyloglucan backbone than cellulose. Seems to work simultaneously with xyloglucan 6-xylosyltransferase. Xyloglucan is a noncellulosic polysaccharides of plant cell wall and consists of a glucan backbone substituted by xylose, galactose and fucose. In Oryza sativa subsp. japonica (Rice), this protein is Probable xyloglucan glycosyltransferase 2 (CSLC2).